Consider the following 350-residue polypeptide: ATP-dependent (S)-NAD(P)H-hydrate dehydratase (350 aa).

The YjeF C-terminal domain occupies leucine 35–leucine 342. (6S)-NADPHX contacts are provided by residues glycine 139 and asparagine 192–arginine 198. ATP-binding positions include lysine 230 to aspartate 234 and glycine 249 to glycine 258. Aspartate 259 serves as a coordination point for (6S)-NADPHX.

This sequence belongs to the NnrD/CARKD family. Requires Mg(2+) as cofactor.

It is found in the cytoplasm. It carries out the reaction (6S)-NADHX + ATP = ADP + phosphate + NADH + H(+). The catalysed reaction is (6S)-NADPHX + ATP = ADP + phosphate + NADPH + H(+). Functionally, catalyzes the dehydration of the S-form of NAD(P)HX at the expense of ATP, which is converted to ADP. Together with NAD(P)HX epimerase, which catalyzes the epimerization of the S- and R-forms, the enzyme allows the repair of both epimers of NAD(P)HX, a damaged form of NAD(P)H that is a result of enzymatic or heat-dependent hydration. The sequence is that of ATP-dependent (S)-NAD(P)H-hydrate dehydratase from Mycosarcoma maydis (Corn smut fungus).